The primary structure comprises 342 residues: MLKEPPKNSREKTKNLLLTLQDKICSGLENVDGKGKFTEESWLRDEGGGGRSRVLKNGSIFEQAGVNFSEVQGKELPQSIISQRPEAKGHEWFATGTSMVLHPKNPYIPTVHLNYRYFEAGPVWWFGGGADLTPFYPYLSDVRNFHNEHKKACEKVDQDLHKVFKPWCDEYFFLKHRNESRGIGGIFYDYQDGSGNIYRGNNQKGEASKASQNIGRSNLNWDDLFSLAENCGQAFLPSYLPIIEKRASQAYSSKEREFQLYRRGRYVEFNLVWDRGTIFGLQTNGRTESILMSLPPLARWEYGYKARKNSREEFLTSIFTKPQDWLNDKELEKFCIENNIFD.

Ser98 serves as a coordination point for substrate. Residues His102 and His112 each coordinate a divalent metal cation. His112 serves as the catalytic Proton donor. 114-116 (NYR) provides a ligand contact to substrate. A divalent metal cation is bound by residues His146 and His176. The interval 266–301 (YVEFNLVWDRGTIFGLQTNGRTESILMSLPPLARWE) is important for dimerization.

This sequence belongs to the aerobic coproporphyrinogen-III oxidase family. As to quaternary structure, homodimer. A divalent metal cation is required as a cofactor.

It localises to the cytoplasm. The enzyme catalyses coproporphyrinogen III + O2 + 2 H(+) = protoporphyrinogen IX + 2 CO2 + 2 H2O. It participates in porphyrin-containing compound metabolism; protoporphyrin-IX biosynthesis; protoporphyrinogen-IX from coproporphyrinogen-III (O2 route): step 1/1. In terms of biological role, involved in the heme and chlorophyll biosynthesis. Catalyzes the aerobic oxidative decarboxylation of propionate groups of rings A and B of coproporphyrinogen-III to yield the vinyl groups in protoporphyrinogen-IX. This is Oxygen-dependent coproporphyrinogen-III oxidase from Prochlorococcus marinus (strain MIT 9301).